Reading from the N-terminus, the 181-residue chain is Probable pyruvoyl-dependent arginine decarboxylase (181 aa).

Serine 43 bears the Pyruvic acid (Ser) mark.

This sequence belongs to the PdaD family. Requires pyruvate as cofactor.

It catalyses the reaction L-arginine + H(+) = agmatine + CO2. The chain is Probable pyruvoyl-dependent arginine decarboxylase from Chlorobium phaeovibrioides (strain DSM 265 / 1930) (Prosthecochloris vibrioformis (strain DSM 265)).